A 240-amino-acid chain; its full sequence is Fimbriae Y protein (240 aa).

It is found in the fimbrium. The sequence is that of Fimbriae Y protein (fimY) from Salmonella typhimurium (strain LT2 / SGSC1412 / ATCC 700720).